A 238-amino-acid chain; its full sequence is 1-(5-phosphoribosyl)-5-[(5-phosphoribosylamino)methylideneamino] imidazole-4-carboxamide isomerase (238 aa).

The Proton acceptor role is filled by Asp8. The active-site Proton donor is the Asp129.

This sequence belongs to the HisA/HisF family.

It localises to the cytoplasm. The enzyme catalyses 1-(5-phospho-beta-D-ribosyl)-5-[(5-phospho-beta-D-ribosylamino)methylideneamino]imidazole-4-carboxamide = 5-[(5-phospho-1-deoxy-D-ribulos-1-ylimino)methylamino]-1-(5-phospho-beta-D-ribosyl)imidazole-4-carboxamide. Its pathway is amino-acid biosynthesis; L-histidine biosynthesis; L-histidine from 5-phospho-alpha-D-ribose 1-diphosphate: step 4/9. This Anaeromyxobacter dehalogenans (strain 2CP-1 / ATCC BAA-258) protein is 1-(5-phosphoribosyl)-5-[(5-phosphoribosylamino)methylideneamino] imidazole-4-carboxamide isomerase.